Consider the following 1333-residue polypeptide: MAAAWQGWLLWALLLNSAQGELYTPTHKAGFCTFYEECGKNPELSGGLTSLSNISCLSNTPARHVTGDHLALLQRVCPRLYNGPNDTYACCSTKQLVSLDSSLSITKALLTRCPACSENFVSIHCHNTCSPDQSLFINVTRVVQRDPGQLPAVVAYEAFYQRSFAEKAYESCSRVRIPAAASLAVGSMCGVYGSALCNAQRWLNFQGDTGNGLAPLDITFHLLEPGQALADGMKPLDGKITPCNESQGEDSAACSCQDCAASCPVIPPPPALRPSFYMGRMPGWLALIIIFTAVFVLLSVVLVYLRVASNRNKNKTAGSQEAPNLPRKRRFSPHTVLGRFFESWGTRVASWPLTVLALSFIVVIALSVGLTFIELTTDPVELWSAPKSQARKEKAFHDEHFGPFFRTNQIFVTAKNRSSYKYDSLLLGPKNFSGILSLDLLQELLELQERLRHLQVWSHEAQRNISLQDICYAPLNPHNTSLTDCCVNSLLQYFQNNHTLLLLTANQTLNGQTSLVDWKDHFLYCANAPLTYKDGTALALSCIADYGAPVFPFLAVGGYQGTDYSEAEALIITFSINNYPADDPRMAHAKLWEEAFLKEMQSFQRSTADKFQIAFSAERSLEDEINRTTIQDLPVFAISYLIVFLYISLALGSYSRWSRVAVDSKATLGLGGVAVVLGAVVAAMGFYSYLGVPSSLVIIQVVPFLVLAVGADNIFIFVLEYQRLPRMPGEQREAHIGRTLGSVAPSMLLCSLSEAICFFLGALTSMPAVRTFALTSGLAIIFDFLLQMTAFVALLSLDSKRQEASRPDVVCCFSSRNLPPPKQKEGLLLCFFRKIYTPFLLHRFIRPVVLLLFLVLFGANLYLMCNISVGLDQDLALPKDSYLIDYFLFLNRYLEVGPPVYFDTTSGYNFSTEAGMNAICSSAGCESFSLTQKIQYASEFPNQSYVAIAASSWVDDFIDWLTPSSSCCRIYTRGPHKDEFCPSTDTSFNCLKNCMNRTLGPVRPTTEQFHKYLPWFLNDTPNIRCPKGGLAAYRTSVNLSSDGQIIASQFMAYHKPLRNSQDFTEALRASRLLAANITAELRKVPGTDPNFEVFPYTISNVFYQQYLTVLPEGIFTLALCFVPTFVVCYLLLGLDIRSGILNLLSIIMILVDTIGLMAVWGISYNAVSLINLVTAVGMSVEFVSHITRSFAVSTKPTRLERAKDATIFMGSAVFAGVAMTNFPGILILGFAQAQLIQIFFFRLNLLITLLGLLHGLVFLPVVLSYLGPDVNQALVLEEKLATEAAMVSEPSCPQYPFPADANTSDYVNYGFNPEFIPEINAASSSLPKSDQKF.

An N-terminal signal peptide occupies residues 1–20; it reads MAAAWQGWLLWALLLNSAQG. Over 21–284 the chain is Extracellular; it reads ELYTPTHKAG…SFYMGRMPGW (264 aa). Cystine bridges form between Cys-32/Cys-90, Cys-38/Cys-56, Cys-77/Cys-125, Cys-91/Cys-129, Cys-113/Cys-254, Cys-116/Cys-172, Cys-189/Cys-197, Cys-243/Cys-259, and Cys-256/Cys-263. Residues 285-305 form a helical membrane-spanning segment; it reads LALIIIFTAVFVLLSVVLVYL. The Cytoplasmic portion of the chain corresponds to 306–352; that stretch reads RVASNRNKNKTAGSQEAPNLPRKRRFSPHTVLGRFFESWGTRVASWP. The chain crosses the membrane as a helical span at residues 353 to 373; sequence LTVLALSFIVVIALSVGLTFI. Over 374-632 the chain is Extracellular; that stretch reads ELTTDPVELW…DEINRTTIQD (259 aa). 2 cysteine pairs are disulfide-bonded: Cys-471–Cys-485 and Cys-525–Cys-542. Residues 632 to 797 enclose the SSD domain; the sequence is DLPVFAISYL…MTAFVALLSL (166 aa). The chain crosses the membrane as a helical span at residues 633-653; that stretch reads LPVFAISYLIVFLYISLALGS. At 654–665 the chain is on the cytoplasmic side; sequence YSRWSRVAVDSK. Residues 666–686 traverse the membrane as a helical segment; it reads ATLGLGGVAVVLGAVVAAMGF. The Extracellular segment spans residues 687 to 696; it reads YSYLGVPSSL. The chain crosses the membrane as a helical span at residues 697–717; that stretch reads VIIQVVPFLVLAVGADNIFIF. Residues 718–742 are Cytoplasmic-facing; sequence VLEYQRLPRMPGEQREAHIGRTLGS. A helical transmembrane segment spans residues 743–763; sequence VAPSMLLCSLSEAICFFLGAL. At 764-776 the chain is on the extracellular side; the sequence is TSMPAVRTFALTS. A helical membrane pass occupies residues 777–797; sequence GLAIIFDFLLQMTAFVALLSL. Over 798–846 the chain is Cytoplasmic; the sequence is DSKRQEASRPDVVCCFSSRNLPPPKQKEGLLLCFFRKIYTPFLLHRFIR. The chain crosses the membrane as a helical span at residues 847-867; it reads PVVLLLFLVLFGANLYLMCNI. Residues 868-1113 are Extracellular-facing; it reads SVGLDQDLAL…QQYLTVLPEG (246 aa). Intrachain disulfides connect Cys-920–Cys-925, Cys-967–Cys-1025, and Cys-981–Cys-990. The helical transmembrane segment at 1114-1134 threads the bilayer; it reads IFTLALCFVPTFVVCYLLLGL. Residues 1135–1142 lie on the Cytoplasmic side of the membrane; sequence DIRSGILN. A helical transmembrane segment spans residues 1143 to 1163; it reads LLSIIMILVDTIGLMAVWGIS. Topologically, residues 1164–1165 are extracellular; it reads YN. Residues 1166–1186 traverse the membrane as a helical segment; the sequence is AVSLINLVTAVGMSVEFVSHI. The Cytoplasmic segment spans residues 1187–1206; it reads TRSFAVSTKPTRLERAKDAT. The helical transmembrane segment at 1207–1227 threads the bilayer; that stretch reads IFMGSAVFAGVAMTNFPGILI. Over 1228 to 1242 the chain is Extracellular; the sequence is LGFAQAQLIQIFFFR. A helical transmembrane segment spans residues 1243–1263; that stretch reads LNLLITLLGLLHGLVFLPVVL. Topologically, residues 1264-1333 are cytoplasmic; it reads SYLGPDVNQA…SSLPKSDQKF (70 aa).

It belongs to the patched family. In terms of assembly, interacts with RAB11A, MYO5B and RAB11FIP2. Interaction with RAB11A, MYO5B and RAB11FIP2 is required for proper transport to the plasma membrane upon cholesterol depletion. Interacts with NPC2. Interacts with LIMA1. Post-translationally, highly glycosylated. In terms of tissue distribution, expressed in small intestine, stomach and muscle, along with detectable expression in lung, heart, gall bladder, brain, testis, skin and liver. Expression in liver is extremely low.

The protein resides in the apical cell membrane. The protein localises to the cell membrane. The enzyme catalyses cholesterol(in) = cholesterol(out). It catalyses the reaction sitosterol(out) = sitosterol(in). Its function is as follows. Plays a major role in cholesterol homeostasis. Critical for the uptake of cholesterol across the plasma membrane of the intestinal enterocyte. Involved in plant sterol absorption, it transports sitosterol, although at lower rates than cholesterol. May have a function in the transport of multiple lipids and their homeostasis, thereby influencing lipid metabolism regulation. May be involved in caveolin trafficking from the plasma membrane. Acts as a negative regulator of NPC2 and down-regulates its expression and secretion by inhibiting its maturation and accelerating its degradation. The sequence is that of NPC1-like intracellular cholesterol transporter 1 from Mus musculus (Mouse).